The primary structure comprises 178 residues: 6,7-dimethyl-8-ribityllumazine synthase (178 aa).

5-amino-6-(D-ribitylamino)uracil contacts are provided by residues Tyr-27, 58 to 60 (SLE), and 82 to 84 (CVI). 87–88 (AT) serves as a coordination point for (2S)-2-hydroxy-3-oxobutyl phosphate. His-90 acts as the Proton donor in catalysis. Asn-114 is a 5-amino-6-(D-ribitylamino)uracil binding site. Arg-128 is a binding site for (2S)-2-hydroxy-3-oxobutyl phosphate.

The protein belongs to the DMRL synthase family.

It carries out the reaction (2S)-2-hydroxy-3-oxobutyl phosphate + 5-amino-6-(D-ribitylamino)uracil = 6,7-dimethyl-8-(1-D-ribityl)lumazine + phosphate + 2 H2O + H(+). It functions in the pathway cofactor biosynthesis; riboflavin biosynthesis; riboflavin from 2-hydroxy-3-oxobutyl phosphate and 5-amino-6-(D-ribitylamino)uracil: step 1/2. In terms of biological role, catalyzes the formation of 6,7-dimethyl-8-ribityllumazine by condensation of 5-amino-6-(D-ribitylamino)uracil with 3,4-dihydroxy-2-butanone 4-phosphate. This is the penultimate step in the biosynthesis of riboflavin. This Jannaschia sp. (strain CCS1) protein is 6,7-dimethyl-8-ribityllumazine synthase.